Consider the following 416-residue polypeptide: Squamosa promoter-binding-like protein 8 (416 aa).

Residues 11–53 (SSCDDFGYNATPPPPPSLLPIMDQDGGGGSIQRDHHHHHNHQQ) form a disordered region. The SBP-type zinc-finger motif lies at 182-260 (PPRCQAEGCK…ADHNRRRRKS (79 aa)). Zn(2+) contacts are provided by Cys-185, Cys-190, Cys-207, His-210, Cys-227, Cys-230, His-234, and Cys-246. The Bipartite nuclear localization signal signature appears at 243–259 (KKSCRKRLADHNRRRRK). Residues 250 to 299 (LADHNRRRRKSKPSDGEHSGEKRRAQANKSAATKDKAGSSSKNAGIGDGF) are disordered. A compositionally biased stretch (basic and acidic residues) spans 261–273 (KPSDGEHSGEKRR).

Expressed in stems, leaf sheaths, and young panicles.

It localises to the nucleus. In terms of biological role, probable transcription factor that plays an important role in building the laminar joint between leaf blade and leaf sheath boundary, thereby controlling ligule and auricle development. The polypeptide is Squamosa promoter-binding-like protein 8 (SPL8) (Oryza sativa subsp. indica (Rice)).